Reading from the N-terminus, the 87-residue chain is FXYD domain-containing ion transport regulator 3 (87 aa).

An N-terminal signal peptide occupies residues 1–20 (MQKVTLGLLVFLAGFPVLDA). The Extracellular portion of the chain corresponds to 21–38 (NDLEDKNSPFYYDWHSLQ). Residues 39 to 59 (VGGLICAGVLCAMGIIIVMSA) form a helical membrane-spanning segment. Residues 60 to 87 (KCKCKFGQKSGHHPGETPPLITPGSAQS) lie on the Cytoplasmic side of the membrane. Positions 66–87 (GQKSGHHPGETPPLITPGSAQS) are disordered.

This sequence belongs to the FXYD family. In terms of assembly, regulatory subunit of the sodium/potassium-transporting ATPase which is composed of a catalytic alpha subunit, a non-catalytic beta subunit and an additional regulatory subunit. Interacts with catalytic alpha subunit ATP1A1. Also interacts with non-catalytic beta subunit ATP1B1. Interacts with the ATP1A1-ATP1B1, ATP1A2-ATP1B1 and ATP1A3-ATP1B1 NKA isozymes. In terms of processing, glutathionylated. As to expression, isoform 1: Expressed mainly in differentiated cells (at protein level). Isoform 2: Expressed mainly in undifferentiated cells (at protein level).

The protein localises to the cell membrane. Associates with and regulates the activity of the sodium/potassium-transporting ATPase (NKA) which transports Na(+) out of the cell and K(+) into the cell. Reduces glutathionylation of the NKA beta-1 subunit ATP1B1, thus reversing glutathionylation-mediated inhibition of ATP1B1. Induces a hyperpolarization-activated chloride current when expressed in Xenopus oocytes. Its function is as follows. Decreases the apparent K+ and Na+ affinity of the sodium/potassium-transporting ATPase over a large range of membrane potentials. Functionally, decreases the apparent K+ affinity of the sodium/potassium-transporting ATPase only at slightly negative and positive membrane potentials and increases the apparent Na+ affinity over a large range of membrane potentials. The protein is FXYD domain-containing ion transport regulator 3 (FXYD3) of Homo sapiens (Human).